A 149-amino-acid chain; its full sequence is Large ribosomal subunit protein bL9 (149 aa).

It belongs to the bacterial ribosomal protein bL9 family.

Binds to the 23S rRNA. In Teredinibacter turnerae (strain ATCC 39867 / T7901), this protein is Large ribosomal subunit protein bL9.